The chain runs to 614 residues: Bifunctional 3'-phosphoadenosine 5'-phosphosulfate synthase 2 (614 aa).

An adenylyl-sulfate kinase region spans residues 1 to 215 (MSGIKKQKTE…VVELLQEQNI (215 aa)). Residue 52–57 (GAGKTT) participates in ATP binding. Adenosine 5'-phosphosulfate-binding positions include 79 to 82 (DNVR), Phe-91, 96 to 99 (REEN), 122 to 123 (IS), Lys-161, and 174 to 175 (GF). Residues Ser-197, 409–412 (QLRN), 511–515 (GRDPA), and Ala-553 contribute to the ATP site. The tract at residues 224–614 (IHELFVPENK…TDYYRSLEKN (391 aa)) is sulfate adenylyltransferase.

It in the N-terminal section; belongs to the APS kinase family. In the C-terminal section; belongs to the sulfate adenylyltransferase family. As to expression, expressed in cartilage and adrenal gland.

It carries out the reaction sulfate + ATP + H(+) = adenosine 5'-phosphosulfate + diphosphate. The enzyme catalyses adenosine 5'-phosphosulfate + ATP = 3'-phosphoadenylyl sulfate + ADP + H(+). It participates in sulfur metabolism; sulfate assimilation. Bifunctional enzyme with both ATP sulfurylase and APS kinase activity, which mediates two steps in the sulfate activation pathway. The first step is the transfer of a sulfate group to ATP to yield adenosine 5'-phosphosulfate (APS), and the second step is the transfer of a phosphate group from ATP to APS yielding 3'-phosphoadenylylsulfate/PAPS, the activated sulfate donor used by sulfotransferases. In mammals, PAPS is the sole source of sulfate while APS appears to only be an intermediate in the sulfate-activation pathway. Plays indirectly an important role in skeletogenesis during postnatal growth. The chain is Bifunctional 3'-phosphoadenosine 5'-phosphosulfate synthase 2 (PAPSS2) from Homo sapiens (Human).